Consider the following 520-residue polypeptide: GMP synthase [glutamine-hydrolyzing] (520 aa).

The Glutamine amidotransferase type-1 domain maps to 12 to 205 (KIIVLDYGSQ…AISICGARGD (194 aa)). The Nucleophile role is filled by cysteine 89. Active-site residues include histidine 179 and glutamate 181. The 190-residue stretch at 206-395 (WSMDNFIDME…LGMPEEIVWR (190 aa)) folds into the GMPS ATP-PPase domain. 233–239 (SGGVDSS) lines the ATP pocket.

As to quaternary structure, homodimer.

It catalyses the reaction XMP + L-glutamine + ATP + H2O = GMP + L-glutamate + AMP + diphosphate + 2 H(+). The protein operates within purine metabolism; GMP biosynthesis; GMP from XMP (L-Gln route): step 1/1. Functionally, catalyzes the synthesis of GMP from XMP. This is GMP synthase [glutamine-hydrolyzing] from Streptococcus pyogenes serotype M3 (strain SSI-1).